The following is a 1211-amino-acid chain: DNA-directed RNA polymerase subunit beta' (1211 aa).

4 residues coordinate Zn(2+): C60, C62, C75, and C78. Residues D449, D451, and D453 each coordinate Mg(2+). Zn(2+) contacts are provided by C818, C892, C899, and C902.

Belongs to the RNA polymerase beta' chain family. The RNAP catalytic core consists of 2 alpha, 1 beta, 1 beta' and 1 omega subunit. When a sigma factor is associated with the core the holoenzyme is formed, which can initiate transcription. It depends on Mg(2+) as a cofactor. Requires Zn(2+) as cofactor.

It carries out the reaction RNA(n) + a ribonucleoside 5'-triphosphate = RNA(n+1) + diphosphate. Its function is as follows. DNA-dependent RNA polymerase catalyzes the transcription of DNA into RNA using the four ribonucleoside triphosphates as substrates. This chain is DNA-directed RNA polymerase subunit beta', found in Limosilactobacillus reuteri (strain DSM 20016) (Lactobacillus reuteri).